The chain runs to 306 residues: Lipoyl synthase (306 aa).

Residues cysteine 41, cysteine 46, cysteine 52, cysteine 68, cysteine 72, cysteine 75, and serine 281 each contribute to the [4Fe-4S] cluster site. A Radical SAM core domain is found at 54 to 270; it reads GARRTATFMI…RKVAMDKGFK (217 aa). The segment at 283–306 is disordered; the sequence is HADEQVNEAAKEKHRLGEEKLQQN.

Belongs to the radical SAM superfamily. Lipoyl synthase family. Requires [4Fe-4S] cluster as cofactor.

It is found in the cytoplasm. It catalyses the reaction [[Fe-S] cluster scaffold protein carrying a second [4Fe-4S](2+) cluster] + N(6)-octanoyl-L-lysyl-[protein] + 2 oxidized [2Fe-2S]-[ferredoxin] + 2 S-adenosyl-L-methionine + 4 H(+) = [[Fe-S] cluster scaffold protein] + N(6)-[(R)-dihydrolipoyl]-L-lysyl-[protein] + 4 Fe(3+) + 2 hydrogen sulfide + 2 5'-deoxyadenosine + 2 L-methionine + 2 reduced [2Fe-2S]-[ferredoxin]. The protein operates within protein modification; protein lipoylation via endogenous pathway; protein N(6)-(lipoyl)lysine from octanoyl-[acyl-carrier-protein]. Catalyzes the radical-mediated insertion of two sulfur atoms into the C-6 and C-8 positions of the octanoyl moiety bound to the lipoyl domains of lipoate-dependent enzymes, thereby converting the octanoylated domains into lipoylated derivatives. This is Lipoyl synthase from Staphylococcus haemolyticus (strain JCSC1435).